The sequence spans 129 residues: MREKLNLLAKLKSVVYKFDPLNPNTRSIRSFIPLTTCKRSRQLAPECSISFDLGPQNTSPVIDIKFVNGTEKSIKTDTLELMSIVESIELLKKSIRIEEIEKMKTTETTLQDILQPVNKKKDTGAKANR.

The N-terminal 50 residues, 1–50 (MREKLNLLAKLKSVVYKFDPLNPNTRSIRSFIPLTTCKRSRQLAPECSIS), are a transit peptide targeting the mitochondrion.

It belongs to the mitochondrion-specific ribosomal protein mL53 family.

It localises to the mitochondrion. The protein is Large ribosomal subunit protein mL53 (mrpl53) of Dictyostelium discoideum (Social amoeba).